The following is a 562-amino-acid chain: Formate--tetrahydrofolate ligase (562 aa).

71 to 78 serves as a coordination point for ATP; the sequence is TPAGEGKS.

It belongs to the formate--tetrahydrofolate ligase family.

It catalyses the reaction (6S)-5,6,7,8-tetrahydrofolate + formate + ATP = (6R)-10-formyltetrahydrofolate + ADP + phosphate. It participates in one-carbon metabolism; tetrahydrofolate interconversion. This Bacillus cereus (strain ATCC 10987 / NRS 248) protein is Formate--tetrahydrofolate ligase.